A 167-amino-acid chain; its full sequence is Endoribonuclease YbeY (167 aa).

3 residues coordinate Zn(2+): histidine 131, histidine 135, and histidine 141.

The protein belongs to the endoribonuclease YbeY family. The cofactor is Zn(2+).

Its subcellular location is the cytoplasm. In terms of biological role, single strand-specific metallo-endoribonuclease involved in late-stage 70S ribosome quality control and in maturation of the 3' terminus of the 16S rRNA. The sequence is that of Endoribonuclease YbeY from Rickettsia akari (strain Hartford).